Reading from the N-terminus, the 286-residue chain is Diaminopimelate epimerase (286 aa).

Residues N22, Q56, and N76 each contribute to the substrate site. C85 (proton donor) is an active-site residue. Substrate is bound by residues 86-87 (GN), N169, N202, and 220-221 (ER). C229 functions as the Proton acceptor in the catalytic mechanism. 230–231 (GS) is a binding site for substrate.

It belongs to the diaminopimelate epimerase family. In terms of assembly, homodimer.

It localises to the cytoplasm. The enzyme catalyses (2S,6S)-2,6-diaminopimelate = meso-2,6-diaminopimelate. It participates in amino-acid biosynthesis; L-lysine biosynthesis via DAP pathway; DL-2,6-diaminopimelate from LL-2,6-diaminopimelate: step 1/1. Functionally, catalyzes the stereoinversion of LL-2,6-diaminopimelate (L,L-DAP) to meso-diaminopimelate (meso-DAP), a precursor of L-lysine and an essential component of the bacterial peptidoglycan. The polypeptide is Diaminopimelate epimerase (Buchnera aphidicola subsp. Baizongia pistaciae (strain Bp)).